The primary structure comprises 270 residues: tRNA pseudouridine synthase A (270 aa).

The active-site Nucleophile is Asp-60. Tyr-118 is a binding site for substrate.

The protein belongs to the tRNA pseudouridine synthase TruA family. As to quaternary structure, homodimer.

It catalyses the reaction uridine(38/39/40) in tRNA = pseudouridine(38/39/40) in tRNA. Formation of pseudouridine at positions 38, 39 and 40 in the anticodon stem and loop of transfer RNAs. The chain is tRNA pseudouridine synthase A from Salmonella arizonae (strain ATCC BAA-731 / CDC346-86 / RSK2980).